Here is a 953-residue protein sequence, read N- to C-terminus: ATP-dependent 6-phosphofructokinase (953 aa).

Positions 1-558 (MIEGISFASF…QLQGFLLTNS (558 aa)) are N-terminal catalytic PFK domain 1. ATP contacts are provided by residues glycine 193, 256–257 (RC), and 286–289 (GDGS). Aspartate 287 lines the Mg(2+) pocket. Substrate contacts are provided by residues 332-334 (SID), arginine 369, 376-378 (MGR), glutamate 433, arginine 460, and 466-469 (HVQR). Residue aspartate 334 is the Proton acceptor of the active site. An interdomain linker region spans residues 559 to 572 (ADKDRPQEPAKDPL). The segment at 573–953 (RVAIVCTGAP…AKEQGIIDPC (381 aa)) is C-terminal regulatory PFK domain 2. Residues arginine 645, 702 to 706 (TISNN), arginine 740, 747 to 749 (QGG), glutamate 807, arginine 833, 839 to 842 (HVQQ), and arginine 906 each bind beta-D-fructose 2,6-bisphosphate.

Belongs to the phosphofructokinase type A (PFKA) family. ATP-dependent PFK group I subfamily. Eukaryotic two domain clade 'E' sub-subfamily. Heterooctamer of 4 alpha and 4 beta chains. Mg(2+) serves as cofactor.

It is found in the cytoplasm. The catalysed reaction is beta-D-fructose 6-phosphate + ATP = beta-D-fructose 1,6-bisphosphate + ADP + H(+). The protein operates within carbohydrate degradation; glycolysis; D-glyceraldehyde 3-phosphate and glycerone phosphate from D-glucose: step 3/4. With respect to regulation, allosterically activated by ADP, AMP, or fructose 2,6-bisphosphate, and allosterically inhibited by ATP or citrate. In terms of biological role, catalyzes the phosphorylation of D-fructose 6-phosphate to fructose 1,6-bisphosphate by ATP, the first committing step of glycolysis. This is ATP-dependent 6-phosphofructokinase (PFK1) from Yarrowia lipolytica (strain CLIB 122 / E 150) (Yeast).